The following is a 202-amino-acid chain: Imidazoleglycerol-phosphate dehydratase (202 aa).

Belongs to the imidazoleglycerol-phosphate dehydratase family.

The protein resides in the cytoplasm. It catalyses the reaction D-erythro-1-(imidazol-4-yl)glycerol 3-phosphate = 3-(imidazol-4-yl)-2-oxopropyl phosphate + H2O. It participates in amino-acid biosynthesis; L-histidine biosynthesis; L-histidine from 5-phospho-alpha-D-ribose 1-diphosphate: step 6/9. The protein is Imidazoleglycerol-phosphate dehydratase of Brucella abortus (strain S19).